We begin with the raw amino-acid sequence, 352 residues long: Photosystem II protein D1 (352 aa).

T2 bears the N-acetylthreonine mark. T2 bears the Phosphothreonine mark. Helical transmembrane passes span 29-46 (YIGW…TATS), 118-133 (HFLL…EWEL), and 142-156 (WIAV…AATA). H118 contributes to the chlorophyll a binding site. Y126 provides a ligand contact to pheophytin a. [CaMn4O5] cluster contacts are provided by D170 and E189. A helical transmembrane segment spans residues 197-218 (FHMLGVAGVFGGSLFSAMHGSL). H198 contributes to the chlorophyll a binding site. A quinone is bound by residues H215 and 264-265 (SF). Position 215 (H215) interacts with Fe cation. H272 serves as a coordination point for Fe cation. The chain crosses the membrane as a helical span at residues 274-288 (FLAAWPVVGIWFTAL). 4 residues coordinate [CaMn4O5] cluster: H332, E333, D342, and A344. Residues 345-352 (SVEAPVVG) constitute a propeptide that is removed on maturation.

Belongs to the reaction center PufL/M/PsbA/D family. PSII is composed of 1 copy each of membrane proteins PsbA, PsbB, PsbC, PsbD, PsbE, PsbF, PsbH, PsbI, PsbJ, PsbK, PsbL, PsbM, PsbT, PsbX, PsbY, PsbZ, Psb30/Ycf12, at least 3 peripheral proteins of the oxygen-evolving complex and a large number of cofactors. It forms dimeric complexes. The D1/D2 heterodimer binds P680, chlorophylls that are the primary electron donor of PSII, and subsequent electron acceptors. It shares a non-heme iron and each subunit binds pheophytin, quinone, additional chlorophylls, carotenoids and lipids. D1 provides most of the ligands for the Mn4-Ca-O5 cluster of the oxygen-evolving complex (OEC). There is also a Cl(-1) ion associated with D1 and D2, which is required for oxygen evolution. The PSII complex binds additional chlorophylls, carotenoids and specific lipids. is required as a cofactor. Post-translationally, tyr-161 forms a radical intermediate that is referred to as redox-active TyrZ, YZ or Y-Z. In terms of processing, C-terminally processed by CTPA; processing is essential to allow assembly of the oxygen-evolving complex and thus photosynthetic growth.

It localises to the plastid. The protein localises to the chloroplast thylakoid membrane. It carries out the reaction 2 a plastoquinone + 4 hnu + 2 H2O = 2 a plastoquinol + O2. In terms of biological role, photosystem II (PSII) is a light-driven water:plastoquinone oxidoreductase that uses light energy to abstract electrons from H(2)O, generating O(2) and a proton gradient subsequently used for ATP formation. It consists of a core antenna complex that captures photons, and an electron transfer chain that converts photonic excitation into a charge separation. The D1/D2 (PsbA/PsbD) reaction center heterodimer binds P680, the primary electron donor of PSII as well as several subsequent electron acceptors. This chain is Photosystem II protein D1, found in Zygnema circumcarinatum (Green alga).